A 241-amino-acid chain; its full sequence is Demethylmenaquinone methyltransferase (241 aa).

Residues threonine 73 and aspartate 92 each coordinate S-adenosyl-L-methionine.

Belongs to the class I-like SAM-binding methyltransferase superfamily. MenG/UbiE family.

It carries out the reaction a 2-demethylmenaquinol + S-adenosyl-L-methionine = a menaquinol + S-adenosyl-L-homocysteine + H(+). Its pathway is quinol/quinone metabolism; menaquinone biosynthesis; menaquinol from 1,4-dihydroxy-2-naphthoate: step 2/2. Its function is as follows. Methyltransferase required for the conversion of demethylmenaquinol (DMKH2) to menaquinol (MKH2). The sequence is that of Demethylmenaquinone methyltransferase from Chlorobaculum parvum (strain DSM 263 / NCIMB 8327) (Chlorobium vibrioforme subsp. thiosulfatophilum).